A 201-amino-acid polypeptide reads, in one-letter code: CASP-like protein 1E1 (201 aa).

Residues 1–36 are Cytoplasmic-facing; it reads MESQFRPGFDVSQGAGGRASKFGDVVAPTSSTQLPG. Residues 37–57 form a helical membrane-spanning segment; that stretch reads IILRIVAIVLTFISAVVMGAA. Residues 58–87 are Extracellular-facing; that stretch reads RQTTTVTGIDAETALLTSITVTVKSTYSAA. The helical transmembrane segment at 88–108 threads the bilayer; sequence YVYFVVANVLVFFYSVVSLVL. The Cytoplasmic portion of the chain corresponds to 109–127; sequence SMVNKARLTSMSLPFSIAD. A helical transmembrane segment spans residues 128 to 148; it reads LLMVVLLFSSNGAAAAISVVA. The Extracellular portion of the chain corresponds to 149-173; the sequence is EKGQQNLAGWDKICNLFGGLCARVN. A helical membrane pass occupies residues 174–194; that stretch reads AAIVLSMLASVAYVILVVFGM. At 195–201 the chain is on the cytoplasmic side; the sequence is ANLRRSQ.

It belongs to the Casparian strip membrane proteins (CASP) family. Homodimer and heterodimers.

It localises to the cell membrane. The chain is CASP-like protein 1E1 from Musa acuminata (Banana).